The sequence spans 248 residues: Coproheme decarboxylase (248 aa).

Residues arginine 130, tyrosine 144–lysine 148, histidine 171, glutamine 184, and serine 222 contribute to the Fe-coproporphyrin III site. Residue tyrosine 144 is part of the active site.

It belongs to the ChdC family. Type 1 subfamily. The cofactor is Fe-coproporphyrin III.

It catalyses the reaction Fe-coproporphyrin III + 2 H2O2 + 2 H(+) = heme b + 2 CO2 + 4 H2O. It carries out the reaction Fe-coproporphyrin III + H2O2 + H(+) = harderoheme III + CO2 + 2 H2O. The catalysed reaction is harderoheme III + H2O2 + H(+) = heme b + CO2 + 2 H2O. It participates in porphyrin-containing compound metabolism; protoheme biosynthesis. Involved in coproporphyrin-dependent heme b biosynthesis. Catalyzes the decarboxylation of Fe-coproporphyrin III (coproheme) to heme b (protoheme IX), the last step of the pathway. The reaction occurs in a stepwise manner with a three-propionate intermediate. The protein is Coproheme decarboxylase of Geobacillus sp. (strain WCH70).